A 1072-amino-acid chain; its full sequence is Serine/threonine-protein kinase 11-interacting protein (1072 aa).

8 LRR repeats span residues 109 to 130 (SLRQ…RGIY), 132 to 152 (QLES…LSAC), 164 to 185 (ALLS…LRLL), 187 to 209 (ALRF…MDLC), 210 to 231 (ELYH…GPSG), 233 to 254 (ALGT…EQLK), 255 to 276 (NLRH…APLW), and 280 to 301 (ELRK…RAAT). The segment at 333 to 366 (DSSGLGPVIQPLSWPVGSTTETSGGPELSDSLSS) is disordered. Phosphoserine occurs at positions 388, 390, and 393. A compositionally biased stretch (polar residues) spans 441 to 454 (MGSSPLSTTKTPAL). Disordered regions lie at residues 441-522 (MGSS…EQKA) and 741-762 (RPDG…SLSP). Basic and acidic residues-rich tracts occupy residues 478 to 492 (KESP…RVEP) and 501 to 510 (EQDKEEGSRE). Ser757, Ser761, and Ser763 each carry phosphoserine. The segment at 967–993 (HAESPLPVVSDETSEQPASLGPGPSLQ) is disordered.

The protein belongs to the STK11IP family. In terms of assembly, found in a ternary complex composed of STK11/LKB1, STK11IP and SMAD4. Interacts with SMAD4. Interacts with STK11/LKB1.

Its subcellular location is the cytoplasm. In terms of biological role, may regulate STK11/LKB1 function by controlling its subcellular localization. The chain is Serine/threonine-protein kinase 11-interacting protein (Stk11ip) from Mus musculus (Mouse).